A 167-amino-acid polypeptide reads, in one-letter code: tRNA-specific adenosine deaminase (167 aa).

The CMP/dCMP-type deaminase domain occupies 6-117 (FSHEYWMRHA…DAKTGAAGSL (112 aa)). His-57 provides a ligand contact to Zn(2+). Residue Glu-59 is the Proton donor of the active site. Cys-87 and Cys-90 together coordinate Zn(2+).

It belongs to the cytidine and deoxycytidylate deaminase family. As to quaternary structure, homodimer. Requires Zn(2+) as cofactor.

The enzyme catalyses adenosine(34) in tRNA + H2O + H(+) = inosine(34) in tRNA + NH4(+). In terms of biological role, catalyzes the deamination of adenosine to inosine at the wobble position 34 of tRNA(Arg2). Essential for cell viability. This chain is tRNA-specific adenosine deaminase, found in Escherichia coli (strain K12).